Here is a 376-residue protein sequence, read N- to C-terminus: Mitogen-activated protein kinase 6 (376 aa).

Residues 43-329 form the Protein kinase domain; it reads APPIRPIGRG…VDEALHHPYL (287 aa). ATP-binding positions include 49 to 57 and lysine 72; that span reads IGRGAYGIV. Aspartate 169 (proton acceptor) is an active-site residue. Threonine 201 bears the Phosphothreonine mark. The short motif at 201–203 is the TXY element; it reads TEY. A Phosphotyrosine modification is found at tyrosine 203.

Belongs to the protein kinase superfamily. CMGC Ser/Thr protein kinase family. MAP kinase subfamily. In terms of processing, dually phosphorylated on Thr-201 and Tyr-203, which activates the enzyme.

The enzyme catalyses L-seryl-[protein] + ATP = O-phospho-L-seryl-[protein] + ADP + H(+). It carries out the reaction L-threonyl-[protein] + ATP = O-phospho-L-threonyl-[protein] + ADP + H(+). Its activity is regulated as follows. Activated by threonine and tyrosine phosphorylation. This Oryza sativa subsp. japonica (Rice) protein is Mitogen-activated protein kinase 6 (MPK6).